The primary structure comprises 486 residues: MAGGADLDEPPRQSDSTTDRKRPADSTHEIGSADVPRDRAGNKTYDISKLEPARKRQRSKSPSGEAAPRKLKRPGARATISEADRKAARERALERERLAREAATADEERQQINDVVKAHYNAVPERGRDWRKTDSRIKGLRSFNNWIKSCIIQKFSPDEDHQPGRGGGPSILVLDMGCGKGGDLGKWQQAPQHVELYVGMDPADVSIDQARDRYRSMSSRGGRGGRGGRGGGRGPARLFEARFHVKDCFGEPISDIDIIRQVGFESGPHGGGRGFDVVSMMFCMHYAFETEQKARQMLKNVAGALRKGGRLIGAIPNSDVISTKVREHNERMVEMKKKQAEAGDGSKKDDGGDAEEGELDEPEVEKSAEWGNDIYRVRFPGKTPEDGIFRPPFGWKYNFFLHEAVEEVPEYVVPWEAFRALAEDYNLELQWHRSFKEIWDQEKDDRTLGPLSERMHVRDRNTGELLVSPEELEAANFYVGFCFYKV.

Residues 1 to 92 (MAGGADLDEP…ADRKAARERA (92 aa)) are disordered. Composition is skewed to basic and acidic residues over residues 9-28 (EPPR…DSTH), 35-54 (VPRD…EPAR), and 82-92 (EADRKAARERA). The region spanning 135–486 (SRIKGLRSFN…FYVGFCFYKV (352 aa)) is the mRNA cap 0 methyltransferase domain. MRNA is bound at residue 144–145 (NN). S-adenosyl-L-methionine contacts are provided by residues Lys-148, Gly-177, Asp-201, Asp-247, 281–283 (MFC), and Tyr-286. Basic and acidic residues predominate over residues 333–351 (VEMKKKQAEAGDGSKKDDG). Residues 333–365 (VEMKKKQAEAGDGSKKDDGGDAEEGELDEPEVE) are disordered. Acidic residues predominate over residues 352 to 363 (GDAEEGELDEPE).

The protein belongs to the class I-like SAM-binding methyltransferase superfamily. mRNA cap 0 methyltransferase family.

The protein resides in the nucleus. It carries out the reaction a 5'-end (5'-triphosphoguanosine)-ribonucleoside in mRNA + S-adenosyl-L-methionine = a 5'-end (N(7)-methyl 5'-triphosphoguanosine)-ribonucleoside in mRNA + S-adenosyl-L-homocysteine. Its function is as follows. Responsible for methylating the 5'-cap structure of mRNAs. The sequence is that of mRNA cap guanine-N(7) methyltransferase (ABD1) from Pyricularia oryzae (strain 70-15 / ATCC MYA-4617 / FGSC 8958) (Rice blast fungus).